Reading from the N-terminus, the 189-residue chain is Elongation factor P 2 (189 aa).

Belongs to the elongation factor P family.

It localises to the cytoplasm. The protein operates within protein biosynthesis; polypeptide chain elongation. Involved in peptide bond synthesis. Stimulates efficient translation and peptide-bond synthesis on native or reconstituted 70S ribosomes in vitro. Probably functions indirectly by altering the affinity of the ribosome for aminoacyl-tRNA, thus increasing their reactivity as acceptors for peptidyl transferase. This Mesorhizobium japonicum (strain LMG 29417 / CECT 9101 / MAFF 303099) (Mesorhizobium loti (strain MAFF 303099)) protein is Elongation factor P 2.